A 189-amino-acid chain; its full sequence is GMP synthase [glutamine-hydrolyzing] subunit A (189 aa).

Positions 5-189 (KILVVNNYGQ…TNFLEICEKY (185 aa)) constitute a Glutamine amidotransferase type-1 domain. Cys79 acts as the Nucleophile in catalysis. Catalysis depends on residues His166 and Glu168.

In terms of assembly, heterodimer composed of a glutamine amidotransferase subunit (A) and a GMP-binding subunit (B).

The catalysed reaction is XMP + L-glutamine + ATP + H2O = GMP + L-glutamate + AMP + diphosphate + 2 H(+). The protein operates within purine metabolism; GMP biosynthesis; GMP from XMP (L-Gln route): step 1/1. Catalyzes the synthesis of GMP from XMP. This chain is GMP synthase [glutamine-hydrolyzing] subunit A, found in Methanosarcina barkeri (strain Fusaro / DSM 804).